The primary structure comprises 394 residues: Phosphoglycerate kinase (394 aa).

Residues Asp-21–Asn-23, Arg-36, His-59–Arg-62, Arg-118, and Arg-151 contribute to the substrate site. Phosphoserine is present on Ser-183. Lys-201 is a binding site for ATP. Position 299 is a phosphothreonine (Thr-299). ATP is bound by residues Glu-323 and Gly-350–Ser-353.

The protein belongs to the phosphoglycerate kinase family. As to quaternary structure, monomer.

The protein resides in the cytoplasm. The enzyme catalyses (2R)-3-phosphoglycerate + ATP = (2R)-3-phospho-glyceroyl phosphate + ADP. Its pathway is carbohydrate degradation; glycolysis; pyruvate from D-glyceraldehyde 3-phosphate: step 2/5. The protein is Phosphoglycerate kinase (pgk) of Bacillus subtilis (strain 168).